The following is a 234-amino-acid chain: Phosphoribosylaminoimidazole-succinocarboxamide synthase (234 aa).

This sequence belongs to the SAICAR synthetase family.

It carries out the reaction 5-amino-1-(5-phospho-D-ribosyl)imidazole-4-carboxylate + L-aspartate + ATP = (2S)-2-[5-amino-1-(5-phospho-beta-D-ribosyl)imidazole-4-carboxamido]succinate + ADP + phosphate + 2 H(+). It functions in the pathway purine metabolism; IMP biosynthesis via de novo pathway; 5-amino-1-(5-phospho-D-ribosyl)imidazole-4-carboxamide from 5-amino-1-(5-phospho-D-ribosyl)imidazole-4-carboxylate: step 1/2. This is Phosphoribosylaminoimidazole-succinocarboxamide synthase from Clostridium botulinum (strain Okra / Type B1).